The sequence spans 78 residues: Large ribosomal subunit protein bL28 (78 aa).

Residues 1-23 form a disordered region; the sequence is MSRVCQVSGKRVQTGNNVSHANN. The span at 11 to 22 shows a compositional bias: polar residues; it reads RVQTGNNVSHAN.

The protein belongs to the bacterial ribosomal protein bL28 family.

The protein is Large ribosomal subunit protein bL28 of Xanthomonas campestris pv. campestris (strain 8004).